The following is a 910-amino-acid chain: Protein translocase subunit SecA (910 aa).

ATP is bound by residues glutamine 87, 105-109 (GEGKT), and aspartate 501. Residues cysteine 894, cysteine 896, cysteine 905, and histidine 906 each contribute to the Zn(2+) site.

The protein belongs to the SecA family. In terms of assembly, monomer and homodimer. Part of the essential Sec protein translocation apparatus which comprises SecA, SecYEG and auxiliary proteins SecDF-YajC and YidC. Zn(2+) is required as a cofactor.

It localises to the cell inner membrane. Its subcellular location is the cytoplasm. It carries out the reaction ATP + H2O + cellular proteinSide 1 = ADP + phosphate + cellular proteinSide 2.. Its function is as follows. Part of the Sec protein translocase complex. Interacts with the SecYEG preprotein conducting channel. Has a central role in coupling the hydrolysis of ATP to the transfer of proteins into and across the cell membrane, serving both as a receptor for the preprotein-SecB complex and as an ATP-driven molecular motor driving the stepwise translocation of polypeptide chains across the membrane. In Acidiphilium cryptum (strain JF-5), this protein is Protein translocase subunit SecA.